Reading from the N-terminus, the 469-residue chain is Glutamate-1-semialdehyde 2,1-aminomutase, chloroplastic (469 aa).

A chloroplast-targeting transit peptide spans 1 to 34; that stretch reads MAGAAAAVASGISIRPVAAPKISRAPRSRSVVRA. N6-(pyridoxal phosphate)lysine is present on Lys-309.

It belongs to the class-III pyridoxal-phosphate-dependent aminotransferase family. HemL subfamily. In terms of assembly, homodimer. Pyridoxal 5'-phosphate serves as cofactor.

The protein resides in the plastid. The protein localises to the chloroplast. The enzyme catalyses (S)-4-amino-5-oxopentanoate = 5-aminolevulinate. It participates in porphyrin-containing compound metabolism; protoporphyrin-IX biosynthesis; 5-aminolevulinate from L-glutamyl-tRNA(Glu): step 2/2. Its pathway is porphyrin-containing compound metabolism; chlorophyll biosynthesis. The chain is Glutamate-1-semialdehyde 2,1-aminomutase, chloroplastic (GSA) from Hordeum vulgare (Barley).